The following is an 84-amino-acid chain: Glutaredoxin (84 aa).

The region spanning 1-84 (MPPVVIYTTA…AGKLDALLSA (84 aa)) is the Glutaredoxin domain. Cys12 and Cys15 are disulfide-bonded.

This sequence belongs to the glutaredoxin family. Monomer.

It localises to the cytoplasm. Its function is as follows. Has a glutathione-disulfide oxidoreductase activity in the presence of NADPH and glutathione reductase. Reduces low molecular weight disulfides and proteins. This chain is Glutaredoxin (grx), found in Pseudomonas aeruginosa (strain ATCC 15692 / DSM 22644 / CIP 104116 / JCM 14847 / LMG 12228 / 1C / PRS 101 / PAO1).